Consider the following 375-residue polypeptide: Chaperone protein DnaJ 1 (375 aa).

The J domain occupies 4 to 68 (DYYAILGVER…EKRRIVDMGG (65 aa)). A CR-type zinc finger spans residues 127 to 209 (GTKKPITIDT…CGGDGRVRTQ (83 aa)). Zn(2+) is bound by residues Cys-140, Cys-143, Cys-157, Cys-160, Cys-183, Cys-186, Cys-197, and Cys-200. 4 CXXCXGXG motif repeats span residues 140–147 (CDRCEGTG), 157–164 (CSTCNGSG), 183–190 (CPTCRGTG), and 197–204 (CDKCGGDG).

Belongs to the DnaJ family. In terms of assembly, homodimer. Zn(2+) serves as cofactor.

The protein localises to the cytoplasm. Its function is as follows. Participates actively in the response to hyperosmotic and heat shock by preventing the aggregation of stress-denatured proteins and by disaggregating proteins, also in an autonomous, DnaK-independent fashion. Unfolded proteins bind initially to DnaJ; upon interaction with the DnaJ-bound protein, DnaK hydrolyzes its bound ATP, resulting in the formation of a stable complex. GrpE releases ADP from DnaK; ATP binding to DnaK triggers the release of the substrate protein, thus completing the reaction cycle. Several rounds of ATP-dependent interactions between DnaJ, DnaK and GrpE are required for fully efficient folding. Also involved, together with DnaK and GrpE, in the DNA replication of plasmids through activation of initiation proteins. This is Chaperone protein DnaJ 1 from Corynebacterium diphtheriae (strain ATCC 700971 / NCTC 13129 / Biotype gravis).